The sequence spans 221 residues: Transcriptional regulatory protein QseB (221 aa).

Residues 2–116 (RILLIEDDNL…EVAARLQALI (115 aa)) form the Response regulatory domain. Position 51 is a 4-aspartylphosphate (Asp-51). A DNA-binding region (ompR/PhoB-type) is located at residues 124-218 (HSVIEQAGVK…VHGVGYALGQ (95 aa)).

Phosphorylated by QseC.

The protein localises to the cytoplasm. In terms of biological role, member of a two-component regulatory system QseB/QseC. This chain is Transcriptional regulatory protein QseB (qseB), found in Haemophilus influenzae (strain ATCC 51907 / DSM 11121 / KW20 / Rd).